Consider the following 81-residue polypeptide: ATP synthase subunit c, chloroplastic (81 aa).

2 helical membrane passes run alanine 7–glycine 27 and leucine 57–alanine 77.

This sequence belongs to the ATPase C chain family. In terms of assembly, F-type ATPases have 2 components, F(1) - the catalytic core - and F(0) - the membrane proton channel. F(1) has five subunits: alpha(3), beta(3), gamma(1), delta(1), epsilon(1). F(0) has four main subunits: a(1), b(1), b'(1) and c(10-14). The alpha and beta chains form an alternating ring which encloses part of the gamma chain. F(1) is attached to F(0) by a central stalk formed by the gamma and epsilon chains, while a peripheral stalk is formed by the delta, b and b' chains.

The protein resides in the plastid. Its subcellular location is the chloroplast thylakoid membrane. In terms of biological role, f(1)F(0) ATP synthase produces ATP from ADP in the presence of a proton or sodium gradient. F-type ATPases consist of two structural domains, F(1) containing the extramembraneous catalytic core and F(0) containing the membrane proton channel, linked together by a central stalk and a peripheral stalk. During catalysis, ATP synthesis in the catalytic domain of F(1) is coupled via a rotary mechanism of the central stalk subunits to proton translocation. Its function is as follows. Key component of the F(0) channel; it plays a direct role in translocation across the membrane. A homomeric c-ring of between 10-14 subunits forms the central stalk rotor element with the F(1) delta and epsilon subunits. The protein is ATP synthase subunit c, chloroplastic of Pelargonium hortorum (Common geranium).